The chain runs to 207 residues: B2 protein (207 aa).

The tract at residues 1 to 68 is disordered; sequence MIDQEESNFN…FKTLPPAESL (68 aa). 2 stretches are compositionally biased toward low complexity: residues 8–26 and 35–52; these read NFNF…QFHG and KNNN…GENK. The DCD domain maps to 72-204; sequence ETVGGYIFVC…AISLLDIFEE (133 aa).

This Daucus carota (Wild carrot) protein is B2 protein.